Reading from the N-terminus, the 228-residue chain is HTH-type transcriptional repressor RspR (228 aa).

Residues 11–78 (QPVNQQIYRI…PQRGSYVNKI (68 aa)) enclose the HTH gntR-type domain. The H-T-H motif DNA-binding region spans 38 to 57 (EKEVSVRFNVSRQPVREAFI).

Repressor of the rspAB operon. Acts by binding directly to the upstream region of rspA. The polypeptide is HTH-type transcriptional repressor RspR (rspR) (Escherichia coli (strain K12)).